A 277-amino-acid polypeptide reads, in one-letter code: Large ribosomal subunit protein uL2c (277 aa).

2 disordered regions span residues 24–57 and 226–266; these read IVQSKPEKQLTSGQHRKKGRNNRGVITSRHRGGG and NAAD…HKYS.

Belongs to the universal ribosomal protein uL2 family. In terms of assembly, part of the 50S ribosomal subunit.

It localises to the plastid. The protein resides in the chloroplast. This chain is Large ribosomal subunit protein uL2c (rpl2), found in Zygnema circumcarinatum (Green alga).